The chain runs to 450 residues: LanC-like protein 2 (450 aa).

Gly-2 carries the N-myristoyl glycine lipid modification. An interaction with inositol phospholipids region spans residues 2–14 (GETMSKRLKFHLG). Tyr-198 is modified (phosphotyrosine).

Belongs to the LanC-like protein family. In terms of assembly, interacts with an array of inositol phospholipids such as phosphatidylinositol 3-phosphate (PI3P), phosphatidylinositol 4-phosphate (PI4P) and phosphatidylinositol 5-phosphate (PI5P). PIP-binding enhances membrane association. Myristoylated. Essential for membrane association.

It is found in the nucleus. Its subcellular location is the cytoplasm. The protein resides in the cell membrane. Its function is as follows. Necessary for abscisic acid (ABA) binding on the cell membrane and activation of the ABA signaling pathway in granulocytes. This Mus musculus (Mouse) protein is LanC-like protein 2 (Lancl2).